We begin with the raw amino-acid sequence, 164 residues long: MVDLNDKVIRGYLRSLVGDDGLKMIEQMPEGNVTDEEIAAKTGVLLNTVRRTLFILYENKFAIVVRERDSNSGWLTYLWHLDFSDIEHQLMREKKRLLRNLKTRLEFEENHVFYVCPQGCVRLLFDEATETEFLCPMCGEDLVYYDNSRFVGVLKKRVEALSSA.

Positions asparagine 5–glutamate 87 constitute an HTH TFE/IIEalpha-type domain.

This sequence belongs to the TFE family. Monomer. Interaction with RNA polymerase subunits RpoF and RpoE is necessary for Tfe stimulatory transcription activity. Able to interact with Tbp and RNA polymerase in the absence of DNA promoter. Interacts both with the preinitiation and elongation complexes.

Its function is as follows. Transcription factor that plays a role in the activation of archaeal genes transcribed by RNA polymerase. Facilitates transcription initiation by enhancing TATA-box recognition by TATA-box-binding protein (Tbp), and transcription factor B (Tfb) and RNA polymerase recruitment. Not absolutely required for transcription in vitro, but particularly important in cases where Tbp or Tfb function is not optimal. It dynamically alters the nucleic acid-binding properties of RNA polymerases by stabilizing the initiation complex and destabilizing elongation complexes. Seems to translocate with the RNA polymerase following initiation and acts by binding to the non template strand of the transcription bubble in elongation complexes. This is Transcription factor E from Methanosarcina mazei (strain ATCC BAA-159 / DSM 3647 / Goe1 / Go1 / JCM 11833 / OCM 88) (Methanosarcina frisia).